Reading from the N-terminus, the 610-residue chain is GPI transamidase component GPI16 (610 aa).

The first 19 residues, 1 to 19 (MILTLAYFMLGTLLLGVFA), serve as a signal peptide directing secretion. Residues 20–551 (EDTVSQIGIN…STPDFSMPYN (532 aa)) lie on the Lumenal side of the membrane. Asn-184 is a glycosylation site (N-linked (GlcNAc...) asparagine). The helical transmembrane segment at 552-572 (VIILTSTIMGLIFGMLYNLMV) threads the bilayer. The Cytoplasmic portion of the chain corresponds to 573–610 (KRMVTVEEADKITLQSGLKYKLLKLKEKFLGKKKTKTD).

It belongs to the PIGT family. In terms of assembly, forms a complex with CDC91, GPI17, GPI8 and GAA1. Post-translationally, the disulfide bond between GPI8 and GPI16 is important for normal enzyme activity.

The protein localises to the endoplasmic reticulum membrane. The protein operates within glycolipid biosynthesis; glycosylphosphatidylinositol-anchor biosynthesis. In terms of biological role, component of the GPI transamidase complex. Involved in transfer of GPI to proteins. The sequence is that of GPI transamidase component GPI16 (GPI16) from Saccharomyces cerevisiae (strain ATCC 204508 / S288c) (Baker's yeast).